A 275-amino-acid chain; its full sequence is 2,3,4,5-tetrahydropyridine-2,6-dicarboxylate N-succinyltransferase (275 aa).

Arginine 107 and aspartate 144 together coordinate substrate.

This sequence belongs to the transferase hexapeptide repeat family. Homotrimer.

The protein localises to the cytoplasm. It catalyses the reaction (S)-2,3,4,5-tetrahydrodipicolinate + succinyl-CoA + H2O = (S)-2-succinylamino-6-oxoheptanedioate + CoA. It participates in amino-acid biosynthesis; L-lysine biosynthesis via DAP pathway; LL-2,6-diaminopimelate from (S)-tetrahydrodipicolinate (succinylase route): step 1/3. The protein is 2,3,4,5-tetrahydropyridine-2,6-dicarboxylate N-succinyltransferase of Polynucleobacter asymbioticus (strain DSM 18221 / CIP 109841 / QLW-P1DMWA-1) (Polynucleobacter necessarius subsp. asymbioticus).